We begin with the raw amino-acid sequence, 66 residues long: Alpha-actitoxin-Ms11a-1 (66 aa).

Residues 1 to 24 form the signal peptide; sequence MASKIFFVLAVFLVMSAVLPESFA. Intrachain disulfides connect cysteine 26/cysteine 41, cysteine 33/cysteine 46, and cysteine 40/cysteine 61.

The protein localises to the secreted. It localises to the nematocyst. Alpha-toxins act on postsynaptic membranes, they bind to the nicotinic acetylcholine receptors (nAChR) and thus inhibit them. This toxin competes with alpha-bungarotoxin for binding to orthosteric sites on muscle-type T.carlifornicus (IC(50)=408 nM) and human alpha-7/CHRNA7 nAChRs (IC(50)=14.16 uM). This Metridium senile (Brown sea anemone) protein is Alpha-actitoxin-Ms11a-1.